A 128-amino-acid polypeptide reads, in one-letter code: Prokineticin-2 (128 aa).

A signal peptide spans 1-27 (MRSSRCARLLLLLLLPPLLLTPPAGDA). 5 cysteine pairs are disulfide-bonded: Cys-34–Cys-46, Cys-40–Cys-58, Cys-45–Cys-106, Cys-68–Cys-114, and Cys-108–Cys-124. A disordered region spans residues 71 to 95 (MTRKNHFGNGRQERRKRKRRRKKKV). The segment covering 83–95 (ERRKRKRRRKKKV) has biased composition (basic residues).

This sequence belongs to the AVIT (prokineticin) family.

It is found in the secreted. May function as an output molecule from the suprachiasmatic nucleus (SCN) that transmits behavioral circadian rhythm. May also function locally within the SCN to synchronize output. Potently contracts gastrointestinal (GI) smooth muscle. This chain is Prokineticin-2 (PROK2), found in Bos taurus (Bovine).